We begin with the raw amino-acid sequence, 425 residues long: GTPase Obg (425 aa).

Positions Met1–Leu158 constitute an Obg domain. One can recognise an OBG-type G domain in the interval Ala159–Ala331. GTP-binding positions include Gly165–Ser172, Phe190–Lys194, Asp212–Gly215, Asn282–Asp285, and Ser312–Ala314. Mg(2+)-binding residues include Ser172 and Thr192. The 81-residue stretch at Leu345–Ile425 folds into the OCT domain.

The protein belongs to the TRAFAC class OBG-HflX-like GTPase superfamily. OBG GTPase family. In terms of assembly, monomer. It depends on Mg(2+) as a cofactor.

The protein resides in the cytoplasm. An essential GTPase which binds GTP, GDP and possibly (p)ppGpp with moderate affinity, with high nucleotide exchange rates and a fairly low GTP hydrolysis rate. Plays a role in control of the cell cycle, stress response, ribosome biogenesis and in those bacteria that undergo differentiation, in morphogenesis control. The polypeptide is GTPase Obg (Clostridium tetani (strain Massachusetts / E88)).